We begin with the raw amino-acid sequence, 466 residues long: MMNSASVRWQLWIVAFGFFMQTLDTTIVNTALPSMAASLNESPLHMHSVIVSYVLTVAVMLPASGWLADRIGVKNIFFAAILLFTLGSLLCARSETLNELLASRVIQGIGGAMMVPVGRLTVMKIVPRDQYMAAMTFVTLPGQIGPLMGPALGGFLVEYASWHWIFLINLPVGIIGALATWFLMPNYTMRTQRFDISGFLWLAVGMATLTLALDGNRSLGIPPIAIFALITVGLIALLSYWLHARRNERALFNLRLFDTHTFSIGLTGGLLARIGSGMLPFMTPLFLQLGMGFSPFHAGLMMVPMVLGNMGMKRIVVQIVNRLGYRRVLIVSTLLLALVTALFALVALMQWIWMIPIVLFFLGMVNAIRFSTMNTLTLKDLPDTLASGGNSLMSMTMQLSTSLGVSIAGILLGMFSQPHMAAGSGETHMVFIYTYLSMIVIIALPALIFNRVPADTIKQSTLPRKS.

14 helical membrane-spanning segments follow: residues 11-31, 48-68, 71-91, 105-125, 137-157, 164-184, 194-214, 218-238, 262-282, 286-306, 328-347, 351-370, 403-423, and 429-449; these read LWIVAFGFFMQTLDTTIVNTA, SVIVSYVLTVAVMLPASGWLA, IGVKNIFFAAILLFTLGSLLC, VIQGIGGAMMVPVGRLTVMKI, FVTLPGQIGPLMGPALGGFLV, WIFLINLPVGIIGALATWFLM, FDISGFLWLAVGMATLTLALD, SLGIPPIAIFALITVGLIALL, FSIGLTGGLLARIGSGMLPFM, FLQLGMGFSPFHAGLMMVPMV, VLIVSTLLLALVTALFALVA, WIWMIPIVLFFLGMVNAIRF, LGVSIAGILLGMFSQPHMAAG, and MVFIYTYLSMIVIIALPALIF.

Belongs to the major facilitator superfamily. TCR/Tet family.

The protein resides in the cell inner membrane. The protein is Putative multidrug resistance protein MdtD of Pectobacterium carotovorum subsp. carotovorum (strain PC1).